We begin with the raw amino-acid sequence, 569 residues long: F-box-like/WD repeat-containing protein TBL1X (569 aa).

A LisH domain is found at 55-87; the sequence is TSDEVNFLVYRYLQESGFSHSAFTFGIESHISQ. An F-box-like domain is found at 92 to 137; that stretch reads GTLVPPAALISILQKGLQYVEAEISINEDGTVFDGRPIESLSLIDA. Lysine 153 bears the N6-acetyllysine mark. Residues 170–195 form a disordered region; sequence TSASVSQQNPSKNREATVNGEENRAH. Serine 175 carries the post-translational modification Phosphoserine. WD repeat units lie at residues 222–261, 278–317, 319–358, 361–401, 402–441, 444–492, 495–534, and 536–568; these read GHES…NGGS, PSNK…ASTL, QHKG…AKQQ, FHSA…KTFQ, GHTN…CIHD, AHNK…CTHT, KHQE…LVHS, and RGTG…LDLR. Lysine 332 is covalently cross-linked (Glycyl lysine isopeptide (Lys-Gly) (interchain with G-Cter in SUMO2)).

This sequence belongs to the WD repeat EBI family. As to quaternary structure, homotetramer; dimer of dimers. Component of the N-Cor repressor complex, at least composed of NCOR1, NCOR2, HDAC3, TBL1X, TBL1R, CORO2A and GPS2. Interacts with GPS2 (when sumoylated); leading to protect GPS2 against degradation by the proteasome. Component of a E3 ubiquitin ligase complex containing UBE2D1, SIAH1, CACYBP/SIP, SKP1, APC and TBL1X. Probably part of other corepressor complexes, that do not contain NCOR1 and NCOR2. Interacts with histones H2B, H3a and H4. Interacts with MECP2; recruits TBL1X to the heterochromatin foci. Interacts with USP44.

It localises to the nucleus. Functionally, F-box-like protein involved in the recruitment of the ubiquitin/19S proteasome complex to nuclear receptor-regulated transcription units. Plays an essential role in transcription activation mediated by nuclear receptors. Probably acts as integral component of corepressor complexes that mediates the recruitment of the 19S proteasome complex, leading to the subsequent proteasomal degradation of transcription repressor complexes, thereby allowing cofactor exchange. This Macaca fascicularis (Crab-eating macaque) protein is F-box-like/WD repeat-containing protein TBL1X (TBL1X).